An 82-amino-acid chain; its full sequence is Vejovine (82 aa).

The signal sequence occupies residues 1–22 (MNAKTLFVVFLIGMLVTEQVEA). The propeptide occupies 70 to 82 (MTLDEIVDAMYYD).

Belongs to the non-disulfide-bridged peptide (NDBP) superfamily. Long chain multifunctional peptide (group 2) family. As to expression, expressed by the venom gland.

It localises to the secreted. It is found in the target cell membrane. Displays significant potent antimicrobial activity against clinical isolates of Gram-negative multidrug resistant strains of E.coli, P.aeruginosa and A.baumanii with MIC values as low as 4.4 uM. Additionally, it displays low cytolytic and hemolytic activity against human erythrocytes reaching 50% hemolysis at 100 uM. The sequence is that of Vejovine from Vaejovis mexicanus (Mexican scorpion).